The chain runs to 216 residues: MOB kinase activator 3C (216 aa).

The Zn(2+) site is built by Cys-82, Cys-87, His-164, and His-169.

Belongs to the MOB1/phocein family.

Its function is as follows. May regulate the activity of kinases. The sequence is that of MOB kinase activator 3C (MOB3C) from Homo sapiens (Human).